Reading from the N-terminus, the 79-residue chain is Panulirin (79 aa).

The signal sequence occupies residues 1–22; it reads MKNKAVLMLMALFLVAVTQVHG. The propeptide occupies 23-26; that stretch reads DPEP. Intrachain disulfides connect C33–C63, C40–C56, and C46–C64. The propeptide occupies 75 to 79; that stretch reads QLLAA.

As to quaternary structure, monomer. Post-translationally, contains 3 disulfide bonds. In terms of tissue distribution, expressed in hemocytes (at protein level).

Involved in the melanization cascade in response to lipopolysaccharide (LPS). In vitro, reversibly and competitively inhibits trypsin (Ki=8.6 nM) but not serine proteases chymotrypsin, elastase, subtilisin, thrombin and plasmin, cysteine peptidase papain or metallopeptidase carboxypeptidase A. This chain is Panulirin, found in Panulirus argus (Caribbean spiny lobster).